We begin with the raw amino-acid sequence, 382 residues long: Dodecanoyl-[acyl-carrier-protein] hydrolase, chloroplastic (382 aa).

The transit peptide at 1–83 directs the protein to the chloroplast; that stretch reads MATTSLASAF…FSAAEKQWTN (83 aa). Catalysis depends on residues Asn-283, His-285, and Cys-320.

The protein belongs to the acyl-ACP thioesterase family. In terms of assembly, forms homodimers. Expressed in developing cotyledons. Not detected in leaves.

It localises to the plastid. Its subcellular location is the chloroplast. The catalysed reaction is dodecanoyl-[ACP] + H2O = dodecanoate + holo-[ACP] + H(+). Plays an essential role in chain termination during de novo fatty acid synthesis. High thioesterase activity for lauroyl-ACP versus other acyl-ACPs. This is Dodecanoyl-[acyl-carrier-protein] hydrolase, chloroplastic from Umbellularia californica (California bay laurel).